Reading from the N-terminus, the 238-residue chain is Adapter protein MecA (238 aa).

Residues 120–136 (QQQKDNKQNQDQNERNR) are compositionally biased toward basic and acidic residues. The disordered stretch occupies residues 120-139 (QQQKDNKQNQDQNERNRQNT).

It belongs to the MecA family. Homodimer.

In terms of biological role, enables the recognition and targeting of unfolded and aggregated proteins to the ClpC protease or to other proteins involved in proteolysis. The protein is Adapter protein MecA of Staphylococcus saprophyticus subsp. saprophyticus (strain ATCC 15305 / DSM 20229 / NCIMB 8711 / NCTC 7292 / S-41).